The chain runs to 296 residues: 4-hydroxybenzoate octaprenyltransferase (296 aa).

8 helical membrane passes run 28 to 48 (PIGIYLLLWPTLVALWIAAEG), 52 to 72 (LSHVLIFTFGVVLTRAGGCAI), 102 to 122 (ALILFAVLMGAAFLLVLCTNA), 146 to 166 (YYPQVVLGAAYSWGILMTFTA), 169 to 189 (GELPATAWLLYIANLLWTVGY), 219 to 239 (VIILTLQGLSLGCLLLAGARF), 241 to 261 (LGGWFHLGLAVAAACFAWEFW), and 275 to 295 (FLHNHWAGLAIFVGVVLDYAL).

Belongs to the UbiA prenyltransferase family. Mg(2+) serves as cofactor.

The protein localises to the cell inner membrane. It catalyses the reaction all-trans-octaprenyl diphosphate + 4-hydroxybenzoate = 4-hydroxy-3-(all-trans-octaprenyl)benzoate + diphosphate. Its pathway is cofactor biosynthesis; ubiquinone biosynthesis. Catalyzes the prenylation of para-hydroxybenzoate (PHB) with an all-trans polyprenyl group. Mediates the second step in the final reaction sequence of ubiquinone-8 (UQ-8) biosynthesis, which is the condensation of the polyisoprenoid side chain with PHB, generating the first membrane-bound Q intermediate 3-octaprenyl-4-hydroxybenzoate. This Pseudomonas fluorescens (strain ATCC BAA-477 / NRRL B-23932 / Pf-5) protein is 4-hydroxybenzoate octaprenyltransferase.